We begin with the raw amino-acid sequence, 346 residues long: Dihydroorotase (346 aa).

Residues histidine 14 and histidine 16 each contribute to the Zn(2+) site. Substrate-binding positions include 16 to 18 (HLR) and asparagine 42. The Zn(2+) site is built by lysine 100, histidine 137, and histidine 175. Lysine 100 carries the N6-carboxylysine modification. Residue histidine 137 participates in substrate binding. Leucine 220 lines the substrate pocket. Aspartate 248 provides a ligand contact to Zn(2+). Aspartate 248 is an active-site residue. Residues histidine 252 and alanine 264 each contribute to the substrate site.

It belongs to the metallo-dependent hydrolases superfamily. DHOase family. Class II DHOase subfamily. In terms of assembly, homodimer. Zn(2+) serves as cofactor.

It catalyses the reaction (S)-dihydroorotate + H2O = N-carbamoyl-L-aspartate + H(+). It participates in pyrimidine metabolism; UMP biosynthesis via de novo pathway; (S)-dihydroorotate from bicarbonate: step 3/3. Functionally, catalyzes the reversible cyclization of carbamoyl aspartate to dihydroorotate. This chain is Dihydroorotase, found in Ruegeria sp. (strain TM1040) (Silicibacter sp.).